We begin with the raw amino-acid sequence, 493 residues long: GPI alpha-1,6-mannosyltransferase 2 (493 aa).

Residues 1–13 (MWPQDPSRKEVLR) lie on the Cytoplasmic side of the membrane. The chain crosses the membrane as a helical span at residues 14–34 (FAVSCRILTLMLQALFNAIIP). Over 35–77 (DHHAEAFSPPRLAPSGFVDQLVEGLLGGLSHWDAEHFLFIAEH) the chain is Lumenal. The helical transmembrane segment at 78-98 (GYLYEHNFAFFPGFPLALLVG) threads the bilayer. Residues 99-113 (TELLRPLRGLLSLRS) are Cytoplasmic-facing. A helical transmembrane segment spans residues 114 to 134 (CLLISVASLNFLFFMLAAVAL). Residues 135-136 (HD) are Lumenal-facing. Residues 137–157 (LGCLVLHCPHQSFYAALLFCL) traverse the membrane as a helical segment. At 158–161 (SPAN) the chain is on the cytoplasmic side. The chain crosses the membrane as a helical span at residues 162–182 (VFLAAGYSEALFALLTFSAMG). The Lumenal portion of the chain corresponds to 183–192 (QLERGRVWTS). Residues 193-213 (VLLFAFATGVRSNGLVSVGFL) form a helical membrane-spanning segment. The Cytoplasmic portion of the chain corresponds to 214–234 (MHSQCQGFFSSLTMLNPLRQL). A helical transmembrane segment spans residues 235 to 255 (FKLMASLFLSVFTLGLPFALF). The Lumenal portion of the chain corresponds to 256 to 327 (QYYAYTQFCL…KYYELKQVPN (72 aa)). Residues 328–348 (FLLAAPVAILVAWATWTYVTT) traverse the membrane as a helical segment. Topologically, residues 349-378 (HPWLCLTLGLQRSKNNKTLEKPDLGFLSPQ) are cytoplasmic. A helical membrane pass occupies residues 379–399 (VFVYVVHAAVLLLFGGLCMHV). Residues 400–469 (QVLTRFLGSS…HWKTCSPVTR (70 aa)) lie on the Lumenal side of the membrane. The chain crosses the membrane as a helical span at residues 470 to 490 (YILGYFLTYWLLGLLLHCNFL). The Cytoplasmic segment spans residues 491–493 (PWT).

It belongs to the PIGV family. In terms of processing, not N-glycosylated.

It localises to the endoplasmic reticulum membrane. The protein operates within glycolipid biosynthesis; glycosylphosphatidylinositol-anchor biosynthesis. Its function is as follows. Alpha-1,6-mannosyltransferase that catalyzes the transfer of the second mannose, via an alpha-1,6 bond, from a dolichol-phosphate-mannose (Dol-P-Man) to the alpha-D-Man-(1-&gt;4)-alpha-D-GlcN-(1-&gt;6)-(1-radyl,2-acyl-sn-glycero-3-phospho)-2-acyl-inositol (also termed H2) intermediate to generate an alpha-D-Man-(1-&gt;6)-alpha-D-Man-(1-&gt;4)-alpha-D-GlcN-(1-&gt;6)-(1-radyl,2-acyl-sn-glycero-3-phospho)-2-acyl-inositol (also termed H3) and participates in the seventh step of the glycosylphosphatidylinositol-anchor biosynthesis. Also transfers the second mannose on a 2-PEtn-alpha-D-Man-(1-&gt;4)-alpha-D-GlcN-(1-&gt;6)-(1-radyl,2-acyl-sn-glycero-3-phospho)-2-acyl-inositol (also termed H5). This is GPI alpha-1,6-mannosyltransferase 2 from Homo sapiens (Human).